Reading from the N-terminus, the 397-residue chain is Phosphoglycerate kinase (397 aa).

Residues 21–23 (DVN), Arg36, 59–62 (HFGR), Arg119, and Arg152 contribute to the substrate site. Residues Lys202, Glu324, and 354–357 (GGDT) each bind ATP.

It belongs to the phosphoglycerate kinase family. As to quaternary structure, monomer.

The protein localises to the cytoplasm. The enzyme catalyses (2R)-3-phosphoglycerate + ATP = (2R)-3-phospho-glyceroyl phosphate + ADP. It participates in carbohydrate degradation; glycolysis; pyruvate from D-glyceraldehyde 3-phosphate: step 2/5. In Cereibacter sphaeroides (strain ATCC 17025 / ATH 2.4.3) (Rhodobacter sphaeroides), this protein is Phosphoglycerate kinase.